Consider the following 251-residue polypeptide: Flap endonuclease Xni (251 aa).

Asp-104 provides a ligand contact to Mg(2+). Residues 160–248 (VSPQQLSDYW…ALTGNLQQLR (89 aa)) form the 5'-3' exonuclease domain. Leu-171, Ala-172, Pro-180, Val-182, and Ile-185 together coordinate K(+). Residues 184–189 (GIGPKT) are interaction with DNA.

Belongs to the Xni family. It depends on Mg(2+) as a cofactor. K(+) serves as cofactor.

In terms of biological role, has flap endonuclease activity. During DNA replication, flap endonucleases cleave the 5'-overhanging flap structure that is generated by displacement synthesis when DNA polymerase encounters the 5'-end of a downstream Okazaki fragment. The protein is Flap endonuclease Xni of Serratia proteamaculans (strain 568).